The primary structure comprises 181 residues: uncharacterized protein (181 aa).

A helical membrane pass occupies residues 133-153; the sequence is MCVCVHVCACVYVCMCVLVCM.

Its subcellular location is the membrane. This is an uncharacterized protein from Homo sapiens (Human).